A 167-amino-acid polypeptide reads, in one-letter code: Large ribosomal subunit protein uL10 (167 aa).

This sequence belongs to the universal ribosomal protein uL10 family. Part of the ribosomal stalk of the 50S ribosomal subunit. The N-terminus interacts with L11 and the large rRNA to form the base of the stalk. The C-terminus forms an elongated spine to which L12 dimers bind in a sequential fashion forming a multimeric L10(L12)X complex.

Its function is as follows. Forms part of the ribosomal stalk, playing a central role in the interaction of the ribosome with GTP-bound translation factors. The chain is Large ribosomal subunit protein uL10 from Lactiplantibacillus plantarum (strain ATCC BAA-793 / NCIMB 8826 / WCFS1) (Lactobacillus plantarum).